Reading from the N-terminus, the 333-residue chain is Phosphate acyltransferase (333 aa).

It belongs to the PlsX family. In terms of assembly, homodimer. Probably interacts with PlsY.

Its subcellular location is the cytoplasm. The enzyme catalyses a fatty acyl-[ACP] + phosphate = an acyl phosphate + holo-[ACP]. It functions in the pathway lipid metabolism; phospholipid metabolism. Functionally, catalyzes the reversible formation of acyl-phosphate (acyl-PO(4)) from acyl-[acyl-carrier-protein] (acyl-ACP). This enzyme utilizes acyl-ACP as fatty acyl donor, but not acyl-CoA. The polypeptide is Phosphate acyltransferase (Lactobacillus johnsonii (strain CNCM I-12250 / La1 / NCC 533)).